The chain runs to 462 residues: B3 domain-containing protein REM8 (462 aa).

3 consecutive DNA-binding regions (TF-B3) follow at residues 11 to 103 (NKHF…LGPS), 148 to 243 (CFSQ…LCSR), and 249 to 346 (FVKL…FSKI). A disordered region spans residues 351-419 (FEAEDRRHKR…NLQKTQACSV (69 aa)). The segment covering 369-397 (ETDKGEPSRATKMGPELEKREKTAEKGEP) has biased composition (basic and acidic residues). The span at 399–418 (RASNKSSGKQGNLQKTQACS) shows a compositional bias: polar residues.

It localises to the nucleus. The polypeptide is B3 domain-containing protein REM8 (REM8) (Arabidopsis thaliana (Mouse-ear cress)).